A 284-amino-acid polypeptide reads, in one-letter code: uncharacterized protein (284 aa).

The 130-residue stretch at 4 to 133 (PLHLFWHRRD…AVHRQWDQLL (130 aa)) folds into the Photolyase/cryptochrome alpha/beta domain.

This is an uncharacterized protein from Synechococcus sp. (strain PCC 6716).